A 270-amino-acid polypeptide reads, in one-letter code: Diaminopimelate epimerase (270 aa).

3 residues coordinate substrate: asparagine 15, glutamine 49, and asparagine 66. Residue cysteine 75 is the Proton donor of the active site. Substrate is bound by residues 76–77, asparagine 155, asparagine 187, and 204–205; these read GN and ER. Cysteine 213 functions as the Proton acceptor in the catalytic mechanism. Position 214–215 (214–215) interacts with substrate; it reads GS.

This sequence belongs to the diaminopimelate epimerase family. Homodimer.

It is found in the cytoplasm. The enzyme catalyses (2S,6S)-2,6-diaminopimelate = meso-2,6-diaminopimelate. The protein operates within amino-acid biosynthesis; L-lysine biosynthesis via DAP pathway; DL-2,6-diaminopimelate from LL-2,6-diaminopimelate: step 1/1. Functionally, catalyzes the stereoinversion of LL-2,6-diaminopimelate (L,L-DAP) to meso-diaminopimelate (meso-DAP), a precursor of L-lysine and an essential component of the bacterial peptidoglycan. This chain is Diaminopimelate epimerase, found in Rickettsia conorii (strain ATCC VR-613 / Malish 7).